Consider the following 164-residue polypeptide: Protein-export protein SecB (164 aa).

It belongs to the SecB family. In terms of assembly, homotetramer, a dimer of dimers. One homotetramer interacts with 1 SecA dimer.

It localises to the cytoplasm. One of the proteins required for the normal export of preproteins out of the cell cytoplasm. It is a molecular chaperone that binds to a subset of precursor proteins, maintaining them in a translocation-competent state. It also specifically binds to its receptor SecA. This Janthinobacterium sp. (strain Marseille) (Minibacterium massiliensis) protein is Protein-export protein SecB.